Consider the following 466-residue polypeptide: Oryzain beta chain (466 aa).

The N-terminal stretch at 1–21 (MAARAAAAAFLLLLIVGAATA) is a signal peptide. A propeptide spans 22–140 (APDMSIISYN…ERYRHDGVEE (119 aa)) (activation peptide). Cystine bridges form between cysteine 162–cysteine 205, cysteine 196–cysteine 238, and cysteine 296–cysteine 347. Residue cysteine 165 is part of the active site. Residues histidine 302 and asparagine 322 contribute to the active site. Residue asparagine 341 is glycosylated (N-linked (GlcNAc...) asparagine). Residues 358–380 (KSGANPPKPSPTPPTPPTPPPPS) are disordered. Positions 362-466 (NPPKPSPTPP…KRTLAKLNTA (105 aa)) are cleaved as a propeptide — removed in mature form. A compositionally biased stretch (pro residues) spans 363–380 (PPKPSPTPPTPPTPPPPS). Cystine bridges form between cysteine 386/cysteine 398 and cysteine 392/cysteine 413. An N-linked (GlcNAc...) asparagine glycan is attached at asparagine 389.

This sequence belongs to the peptidase C1 family. Expressed only in seeds.

Probable thiol protease. In Oryza sativa subsp. japonica (Rice), this protein is Oryzain beta chain.